The following is a 399-amino-acid chain: Cell division protein DivIB (399 aa).

2 disordered regions span residues M1–Q23 and E35–E119. Residues M1–R133 are Cytoplasmic-facing. Basic and acidic residues-rich tracts occupy residues E35–Q65 and E75–E119. Residues A134–P154 traverse the membrane as a helical segment. The Extracellular segment spans residues Y155–R399. A POTRA domain is found at A156–Y226. A compositionally biased stretch (basic and acidic residues) spans K364 to N388. The disordered stretch occupies residues K364–R399. The span at R389 to R399 shows a compositional bias: polar residues.

This sequence belongs to the FtsQ/DivIB family. DivIB subfamily.

Its subcellular location is the cell membrane. In terms of biological role, cell division protein that may be involved in stabilizing or promoting the assembly of the division complex. This Streptococcus pneumoniae serotype 4 (strain ATCC BAA-334 / TIGR4) protein is Cell division protein DivIB.